The sequence spans 361 residues: Phospho-N-acetylmuramoyl-pentapeptide-transferase (361 aa).

Helical transmembrane passes span 25–45, 73–93, 98–118, 139–159, 168–188, 200–220, 237–257, 264–284, 289–309, and 339–359; these read RGILAALTALFLSLWMGPAVI, TMGGSLILLTVTLSVLLWGDL, VWLVLAVMICFGAIGWYDDWI, IFGLAAGLFLYYTADVPAAIT, IALPLVGVSFVVIAYFWIVGF, GLAIMPTVLVACALGVFAYAS, AGELIIICSAIAGAGLGFLWF, VFMGDIGALSLGAVLGTIAVI, MVLVIMGGVFVIETLSVIIQV, and VIVRFWIISVVLVLIGLATLK.

The protein belongs to the glycosyltransferase 4 family. MraY subfamily. Requires Mg(2+) as cofactor.

The protein resides in the cell inner membrane. The catalysed reaction is UDP-N-acetyl-alpha-D-muramoyl-L-alanyl-gamma-D-glutamyl-meso-2,6-diaminopimeloyl-D-alanyl-D-alanine + di-trans,octa-cis-undecaprenyl phosphate = di-trans,octa-cis-undecaprenyl diphospho-N-acetyl-alpha-D-muramoyl-L-alanyl-D-glutamyl-meso-2,6-diaminopimeloyl-D-alanyl-D-alanine + UMP. It functions in the pathway cell wall biogenesis; peptidoglycan biosynthesis. In terms of biological role, catalyzes the initial step of the lipid cycle reactions in the biosynthesis of the cell wall peptidoglycan: transfers peptidoglycan precursor phospho-MurNAc-pentapeptide from UDP-MurNAc-pentapeptide onto the lipid carrier undecaprenyl phosphate, yielding undecaprenyl-pyrophosphoryl-MurNAc-pentapeptide, known as lipid I. The sequence is that of Phospho-N-acetylmuramoyl-pentapeptide-transferase from Xanthomonas oryzae pv. oryzae (strain MAFF 311018).